The chain runs to 155 residues: Glycosylation-dependent cell adhesion molecule 1 (155 aa).

The first 18 residues, 1-18 (MKFFAVLLLASLAATSLA), serve as a signal peptide directing secretion. Residue threonine 34 is glycosylated (O-linked (GalNAc...) threonine). Residues serine 48, serine 53, serine 57, serine 59, and serine 65 each carry the phosphoserine modification. The segment at 74–109 (ARRHQNQNPKLLHPVPQESSFRNTATQSEETKELTP) is disordered. A compositionally biased stretch (polar residues) spans 90-101 (QESSFRNTATQS).

The protein belongs to the PP3/GlyCAM-1 family. Highly expressed in whey fraction of camel milk.

The chain is Glycosylation-dependent cell adhesion molecule 1 (GLYCAM1) from Camelus dromedarius (Dromedary).